Here is a 206-residue protein sequence, read N- to C-terminus: Probable peptidyl-tRNA hydrolase (206 aa).

The active-site Proton acceptor is the histidine 48. TRNA contacts are provided by tyrosine 83, asparagine 85, and asparagine 137.

The protein belongs to the PTH family.

The protein resides in the mitochondrion. It carries out the reaction an N-acyl-L-alpha-aminoacyl-tRNA + H2O = an N-acyl-L-amino acid + a tRNA + H(+). In terms of biological role, peptidyl-tRNA hydrolase involved in the recycling of tRNA-Lys from diacetyl-lysyl-tRNA-Lys and is important for mitochondrial function. In Schizosaccharomyces pombe (strain 972 / ATCC 24843) (Fission yeast), this protein is Probable peptidyl-tRNA hydrolase (pth1).